Consider the following 211-residue polypeptide: Ribosomal RNA small subunit methyltransferase G (211 aa).

S-adenosyl-L-methionine is bound by residues G73, 126-127 (IE), and R142.

Belongs to the methyltransferase superfamily. RNA methyltransferase RsmG family.

Its subcellular location is the cytoplasm. The enzyme catalyses guanosine(527) in 16S rRNA + S-adenosyl-L-methionine = N(7)-methylguanosine(527) in 16S rRNA + S-adenosyl-L-homocysteine. In terms of biological role, specifically methylates the N7 position of guanine in position 527 of 16S rRNA. This chain is Ribosomal RNA small subunit methyltransferase G, found in Methylorubrum extorquens (strain CM4 / NCIMB 13688) (Methylobacterium extorquens).